The sequence spans 64 residues: Ferredoxin-2 (64 aa).

Positions 2–29 (RIHVDQDKCCGAGSCVLAAPDVFDQREE) constitute a 4Fe-4S ferredoxin-type domain. [3Fe-4S] cluster contacts are provided by cysteine 10, cysteine 16, and cysteine 55.

Requires [3Fe-4S] cluster as cofactor.

In terms of biological role, electron transport protein for the cytochrome P-450-SU2 system. The sequence is that of Ferredoxin-2 (subB) from Streptomyces griseolus.